A 155-amino-acid polypeptide reads, in one-letter code: D-aminoacyl-tRNA deacylase (155 aa).

Residues 147 to 148 carry the Gly-cisPro motif, important for rejection of L-amino acids motif; the sequence is GP.

Belongs to the DTD family. Homodimer.

It localises to the cytoplasm. It catalyses the reaction glycyl-tRNA(Ala) + H2O = tRNA(Ala) + glycine + H(+). The catalysed reaction is a D-aminoacyl-tRNA + H2O = a tRNA + a D-alpha-amino acid + H(+). Its function is as follows. An aminoacyl-tRNA editing enzyme that deacylates mischarged D-aminoacyl-tRNAs. Also deacylates mischarged glycyl-tRNA(Ala), protecting cells against glycine mischarging by AlaRS. Acts via tRNA-based rather than protein-based catalysis; rejects L-amino acids rather than detecting D-amino acids in the active site. By recycling D-aminoacyl-tRNA to D-amino acids and free tRNA molecules, this enzyme counteracts the toxicity associated with the formation of D-aminoacyl-tRNA entities in vivo and helps enforce protein L-homochirality. This Corynebacterium urealyticum (strain ATCC 43042 / DSM 7109) protein is D-aminoacyl-tRNA deacylase.